Reading from the N-terminus, the 596-residue chain is DNA primase (596 aa).

The segment at 41–65 adopts a CHC2-type zinc-finger fold; that stretch reads CPFHHEKTPSFSVSQDKQIYKCFGC. In terms of domain architecture, Toprim spans 255–336; sequence DTIIIVEGYM…DIKIIKIPDG (82 aa). Mg(2+)-binding residues include Glu-261, Asp-305, and Asp-307.

The protein belongs to the DnaG primase family. In terms of assembly, monomer. Interacts with DnaB. Zn(2+) serves as cofactor. The cofactor is Mg(2+).

The enzyme catalyses ssDNA + n NTP = ssDNA/pppN(pN)n-1 hybrid + (n-1) diphosphate.. In terms of biological role, RNA polymerase that catalyzes the synthesis of short RNA molecules used as primers for DNA polymerase during DNA replication. This chain is DNA primase, found in Clostridium acetobutylicum (strain ATCC 824 / DSM 792 / JCM 1419 / IAM 19013 / LMG 5710 / NBRC 13948 / NRRL B-527 / VKM B-1787 / 2291 / W).